Here is a 261-residue protein sequence, read N- to C-terminus: tRNA pseudouridine synthase A (261 aa).

D51 (nucleophile) is an active-site residue. Y109 contacts substrate.

It belongs to the tRNA pseudouridine synthase TruA family. Homodimer.

It catalyses the reaction uridine(38/39/40) in tRNA = pseudouridine(38/39/40) in tRNA. In terms of biological role, formation of pseudouridine at positions 38, 39 and 40 in the anticodon stem and loop of transfer RNAs. The sequence is that of tRNA pseudouridine synthase A from Shewanella halifaxensis (strain HAW-EB4).